The sequence spans 158 residues: Small ribosomal subunit protein uS9 (158 aa).

It belongs to the universal ribosomal protein uS9 family.

In Nitrobacter hamburgensis (strain DSM 10229 / NCIMB 13809 / X14), this protein is Small ribosomal subunit protein uS9.